A 321-amino-acid polypeptide reads, in one-letter code: Putative ribose-phosphate pyrophosphokinase 2 (321 aa).

ATP is bound by residues 41-43 (DGE) and 100-101 (RQ). Mg(2+) is bound at residue His-134. D-ribose 5-phosphate-binding positions include Asp-223 and 227–231 (NTGVT).

Belongs to the ribose-phosphate pyrophosphokinase family. Class I subfamily. In terms of assembly, homohexamer. The cofactor is Mg(2+).

The protein resides in the cytoplasm. It carries out the reaction D-ribose 5-phosphate + ATP = 5-phospho-alpha-D-ribose 1-diphosphate + AMP + H(+). The protein operates within metabolic intermediate biosynthesis; 5-phospho-alpha-D-ribose 1-diphosphate biosynthesis; 5-phospho-alpha-D-ribose 1-diphosphate from D-ribose 5-phosphate (route I): step 1/1. In terms of biological role, involved in the biosynthesis of the central metabolite phospho-alpha-D-ribosyl-1-pyrophosphate (PRPP) via the transfer of pyrophosphoryl group from ATP to 1-hydroxyl of ribose-5-phosphate (Rib-5-P). In Lactococcus lactis subsp. lactis (strain IL1403) (Streptococcus lactis), this protein is Putative ribose-phosphate pyrophosphokinase 2.